Reading from the N-terminus, the 357-residue chain is MKTLLVMAGGTGGHIFPGVAVAEQLRGRGWRIVWMGNPDGMEARIVPQHGYETAWVHFGALRGKGLLRKLLLPLNLLRGFWQALGELRRIRPDVVLGMGGYVTFPGGMMAALLGRPLVVHEQNSVAGLANRVLAGVADRVLSGFPHTLKKAGWVGNPVRADIAAVAPPDARFAGRSGPLKLLVVGGSLGAAVLNDTVPKALARIDKAQRPIVTHQAGAKQLEALRAAYAEAGVEGELLPFIDDMASRYAEADLVVCRAGALTVAELAAVGAASLLVPFPHAVDDHQTGNAQFLADRGAAYLLPQPQLDAERLAGIIESLARDHLLDMATKARALAKPRAAEAVAQVCEELAAGRKKK.

Residues 11 to 13 (TGG), Asn123, Arg159, Ser187, Ile241, 260 to 265 (ALTVAE), and Gln286 each bind UDP-N-acetyl-alpha-D-glucosamine.

This sequence belongs to the glycosyltransferase 28 family. MurG subfamily.

It is found in the cell inner membrane. It catalyses the reaction di-trans,octa-cis-undecaprenyl diphospho-N-acetyl-alpha-D-muramoyl-L-alanyl-D-glutamyl-meso-2,6-diaminopimeloyl-D-alanyl-D-alanine + UDP-N-acetyl-alpha-D-glucosamine = di-trans,octa-cis-undecaprenyl diphospho-[N-acetyl-alpha-D-glucosaminyl-(1-&gt;4)]-N-acetyl-alpha-D-muramoyl-L-alanyl-D-glutamyl-meso-2,6-diaminopimeloyl-D-alanyl-D-alanine + UDP + H(+). The protein operates within cell wall biogenesis; peptidoglycan biosynthesis. In terms of biological role, cell wall formation. Catalyzes the transfer of a GlcNAc subunit on undecaprenyl-pyrophosphoryl-MurNAc-pentapeptide (lipid intermediate I) to form undecaprenyl-pyrophosphoryl-MurNAc-(pentapeptide)GlcNAc (lipid intermediate II). This Aromatoleum aromaticum (strain DSM 19018 / LMG 30748 / EbN1) (Azoarcus sp. (strain EbN1)) protein is UDP-N-acetylglucosamine--N-acetylmuramyl-(pentapeptide) pyrophosphoryl-undecaprenol N-acetylglucosamine transferase.